Reading from the N-terminus, the 392-residue chain is Elongation factor Tu 2 (392 aa).

In terms of domain architecture, tr-type G spans 10-201 (KPHVNIGTIG…AVDSYIPTPE (192 aa)). Positions 19–26 (GHVDHGKT) are G1. 19 to 26 (GHVDHGKT) is a binding site for GTP. A Mg(2+)-binding site is contributed by threonine 26. Positions 55–59 (GITIS) are G2. The tract at residues 76–79 (DCPG) is G3. GTP contacts are provided by residues 76-80 (DCPGH) and 131-134 (NKVD). A G4 region spans residues 131–134 (NKVD). Positions 169-171 (SAL) are G5.

The protein belongs to the TRAFAC class translation factor GTPase superfamily. Classic translation factor GTPase family. EF-Tu/EF-1A subfamily. As to quaternary structure, monomer.

It localises to the cytoplasm. The catalysed reaction is GTP + H2O = GDP + phosphate + H(+). In terms of biological role, GTP hydrolase that promotes the GTP-dependent binding of aminoacyl-tRNA to the A-site of ribosomes during protein biosynthesis. The chain is Elongation factor Tu 2 from Rhizobium etli (strain ATCC 51251 / DSM 11541 / JCM 21823 / NBRC 15573 / CFN 42).